The following is a 517-amino-acid chain: MRASTHSWLLLVVVLSLSSFTVNAVILEGLIPPRSHLAPSTFQQPFALSSYLQKLFGTSLRALYGAEQNRQTSVKTFGLREAYHQGIGDKAHERARATFDFRITANDVQADQANIDFIPAIRTVRQRITRAKDPKKYVEVRGQSYRDAMCAASTELDWEDVDVEAPDVTERTTVLAFAKMASAAYKNDTSDWDGIGGFDPTNSFGWEGDGIRGHIFTTHDNDTIVVALKGTSNVFLGGGDTARRDKTNDNLLFSCCCARVSWSWSTVCDCYQGHGDQCGQTCVERALIEKSLYYPAITDLFNNVSYAYPDSQIWITGHSLGGALSSLLGMTFGVPTVTFQAPGERMAAMRLHLPLPPAKHADESPVAALPIVHVYNNADPIATGTCNGAASVCSNFGYAMESKCHSGKSIVYDTVGKLGWSMTINAHRINTLVDDVLTEDWSEKVRKKKAKLRSIGSRGGQISTRGWRWPWHRGDSADDDGDSDEDTDEDDKLAVPKARSEERCQDCTNWHFTDETL.

The Cytoplasmic portion of the chain corresponds to 1-6 (MRASTH). Residues 7–27 (SWLLLVVVLSLSSFTVNAVIL) traverse the membrane as a helical; Signal-anchor for type II membrane protein segment. Over 28-517 (EGLIPPRSHL…TNWHFTDETL (490 aa)) the chain is Lumenal. N-linked (GlcNAc...) asparagine glycosylation is found at N187, N221, and N303. S319 acts as the Charge relay system in catalysis. A disordered region spans residues 466 to 499 (GWRWPWHRGDSADDDGDSDEDTDEDDKLAVPKAR). Over residues 477–491 (ADDDGDSDEDTDEDD) the composition is skewed to acidic residues.

Belongs to the AB hydrolase superfamily. Lipase family. Binds to both phosphatidylinositol (PI) and phosphatidylinositol 3,5-bisphosphate (PIP2).

It localises to the endosome. The protein localises to the multivesicular body membrane. The protein resides in the prevacuolar compartment membrane. It catalyses the reaction a triacylglycerol + H2O = a diacylglycerol + a fatty acid + H(+). Functionally, lipase which is essential for lysis of subvacuolar cytoplasm to vacuole targeted bodies and intravacuolar autophagic bodies. Involved in the lysis of intravacuolar multivesicular body (MVB) vesicles. The intravacuolar membrane disintegration by ATG15 is critical to life span extension. In Mycosarcoma maydis (Corn smut fungus), this protein is Putative lipase ATG15 (ATG15).